Reading from the N-terminus, the 1252-residue chain is LRR receptor-like serine/threonine-protein kinase GSO2 (1252 aa).

Residues 1 to 22 form the signal peptide; it reads MQQNSVLLALFFLCFSSGLGSG. Topologically, residues 23–876 are extracellular; the sequence is QPGQRDDLQT…QRSLSPKTVV (854 aa). N-linked (GlcNAc...) asparagine glycans are attached at residues N62, N77, and N117. 10 LRR repeats span residues 94–118, 120–143, 144–166, 168–190, 191–215, 217–239, 240–263, 265–286, 287–310, and 312–335; these read FNNL…LSNL, SSLE…LGSL, VNLK…TFGN, VNLQ…RFGR, LVQL…IGNC, SLAL…LNRL, KNLQ…LGDL, SIQY…RLTE, LANL…EFWR, and NQLE…ICSN. The N-linked (GlcNAc...) asparagine glycan is linked to N157. Residues N214 and N229 are each glycosylated (N-linked (GlcNAc...) asparagine). An N-linked (GlcNAc...) asparagine glycan is attached at N299. N336 is a glycosylation site (N-linked (GlcNAc...) asparagine). LRR repeat units lie at residues 337–360, 361–384, 386–408, 409–433, 435–456, 457–480, 481–504, 506–528, 529–552, 554–575, 577–599, 600–622, 623–648, 650–670, 671–695, 697–719, 720–743, 745–767, 768–792, 793–816, and 818–839; these read TSLK…ISNC, QSLK…LFQL, ELTN…ISNL, TNLQ…GFLG, LEIM…IGNC, TRLQ…IGRL, KDLT…LGNC, QMTV…FGFL, TALE…LINL, NLTR…LCGS, SYLS…LGKS, TNLD…TFGK, ISEL…GLCK, LTHI…WLGK, LPLL…IFSL, NILT…IGNL, QALN…IGKL, KLFE…IGQL, QDLQ…ISTL, PKLE…IGDM, and SLGY…QFSR. N-linked (GlcNAc...) asparagine glycans are attached at residues N370, N394, and N407. N455 carries N-linked (GlcNAc...) asparagine glycosylation. 4 N-linked (GlcNAc...) asparagine glycosylation sites follow: N538, N554, N559, and N566. Residue N709 is glycosylated (N-linked (GlcNAc...) asparagine). An N-linked (GlcNAc...) asparagine glycan is attached at N780. A glycan (N-linked (GlcNAc...) asparagine) is linked at N823. The helical transmembrane segment at 877 to 897 threads the bilayer; the sequence is IISAISSLAAIALMVLVIILF. The Cytoplasmic segment spans residues 898–1252; the sequence is FKQNHDLFKK…YREMQTDTDK (355 aa). T945 is modified (phosphothreonine). The Protein kinase domain maps to 948–1232; it reads LNEEFMIGSG…PSSRQASEYL (285 aa). ATP is bound by residues 954–962 and K976; that span reads IGSGGSGKV. A phosphotyrosine mark is found at Y1024 and Y1066. The active-site Proton acceptor is D1079. S1114 bears the Phosphoserine mark. Phosphotyrosine occurs at positions 1124 and 1131.

It belongs to the protein kinase superfamily. Ser/Thr protein kinase family. As to quaternary structure, interacts with CIF1 and CIF2. As to expression, mostly expressed in siliques, seeds, developing embryos and seedlings, detected in flower buds, but not in roots, leaves or stems.

It localises to the cell membrane. It catalyses the reaction L-seryl-[protein] + ATP = O-phospho-L-seryl-[protein] + ADP + H(+). It carries out the reaction L-threonyl-[protein] + ATP = O-phospho-L-threonyl-[protein] + ADP + H(+). Its function is as follows. Together with GSO1, receptor-like serine/threonine-kinase required during the development of the epidermal surface in embryos and cotyledons. Involved in the nuclear division phase of megagametogenesis. In coordination with GSO2, regulates root growth through control of cell division and cell fate specification. Controls seedling root growth by modulating sucrose response after germination. Receptor of the peptide hormones CIF1 and CIF2 required for contiguous Casparian strip diffusion barrier formation in roots. This Arabidopsis thaliana (Mouse-ear cress) protein is LRR receptor-like serine/threonine-protein kinase GSO2.